A 578-amino-acid polypeptide reads, in one-letter code: Type I restriction enzyme MjaVIII methylase subunit (578 aa).

Residues 250-255 (EVYTPI), 280-282 (SGS), E303, and 332-333 (DS) contribute to the S-adenosyl-L-methionine site.

It belongs to the N(4)/N(6)-methyltransferase family. The type I restriction/modification system is composed of three polypeptides R, M and S.

The catalysed reaction is a 2'-deoxyadenosine in DNA + S-adenosyl-L-methionine = an N(6)-methyl-2'-deoxyadenosine in DNA + S-adenosyl-L-homocysteine + H(+). In terms of biological role, the subtype gamma methyltransferase (M) subunit of a type I restriction enzyme. The M and S subunits together form a methyltransferase (MTase) that methylates A-2 on the top and A-3 on the bottom strand of the sequence 5'-GAYN(5)GTAA-3'. In the presence of the R subunit the complex can also act as an endonuclease, binding to the same target sequence but cutting the DNA some distance from this site. Whether the DNA is cut or modified depends on the methylation state of the target sequence. When the target site is unmodified, the DNA is cut. When the target site is hemimethylated, the complex acts as a maintenance MTase modifying the DNA so that both strands become methylated. After locating a non-methylated recognition site, the enzyme complex serves as a molecular motor that translocates DNA in an ATP-dependent manner until a collision occurs that triggers cleavage. The protein is Type I restriction enzyme MjaVIII methylase subunit of Methanocaldococcus jannaschii (strain ATCC 43067 / DSM 2661 / JAL-1 / JCM 10045 / NBRC 100440) (Methanococcus jannaschii).